Consider the following 256-residue polypeptide: 3-hydroxy-5-phosphonooxypentane-2,4-dione thiolase (256 aa).

Lys-168 functions as the Schiff-base intermediate with substrate in the catalytic mechanism.

It belongs to the DeoC/FbaB aldolase family. In terms of assembly, homodecamer.

The protein resides in the cytoplasm. It catalyses the reaction dihydroxyacetone phosphate + acetyl-CoA = 3-hydroxy-2,4-dioxopentyl phosphate + CoA. Its function is as follows. Involved in the degradation of phospho-AI-2, thereby terminating induction of the lsr operon and closing the AI-2 signaling cycle. Catalyzes the transfer of an acetyl moiety from 3-hydroxy-5-phosphonooxypentane-2,4-dione to CoA to form glycerone phosphate and acetyl-CoA. The protein is 3-hydroxy-5-phosphonooxypentane-2,4-dione thiolase (lsrF) of Shigella flexneri.